A 177-amino-acid polypeptide reads, in one-letter code: Large ribosomal subunit protein uL6 (177 aa).

This sequence belongs to the universal ribosomal protein uL6 family. In terms of assembly, part of the 50S ribosomal subunit.

In terms of biological role, this protein binds to the 23S rRNA, and is important in its secondary structure. It is located near the subunit interface in the base of the L7/L12 stalk, and near the tRNA binding site of the peptidyltransferase center. This chain is Large ribosomal subunit protein uL6, found in Yersinia enterocolitica serotype O:8 / biotype 1B (strain NCTC 13174 / 8081).